The primary structure comprises 132 residues: Protein MrkF (132 aa).

Its subcellular location is the fimbrium. In terms of biological role, appears to affect the stability of the intact fimbriae on the cell surface. In Klebsiella pneumoniae, this protein is Protein MrkF (mrkF).